The following is a 146-amino-acid chain: UPF0178 protein R01393 (146 aa).

It belongs to the UPF0178 family.

In Rhizobium meliloti (strain 1021) (Ensifer meliloti), this protein is UPF0178 protein R01393.